The chain runs to 260 residues: Receptor-recognizing protein gp38 (260 aa).

Short sequence motifs (GRM) lie at residues 116–123, 125–132, 152–160, 162–173, 176–182, 185–191, 194–204, 210–216, 219–224, and 228–240; these read GRGGNGGS, AAGAAGGN, GGGGGGGGG, RGKLIFGGGGGR, GAGGSSS, SSGATAG, SAPGKGSVGEG, TGGAGGN, AAGGRC, and GNGTEYNGGAAGK. Residues 176–197 form a disordered region; the sequence is GAGGSSSHMSSGATAGTISAPG. Low complexity predominate over residues 180–191; sequence SSSHMSSGATAG.

This sequence belongs to the receptor-recognizing protein gp38 family.

It localises to the virion. Its function is as follows. Receptor binding protein (RBP) that is at the tip of the long tail fibers and serves as the phage recognition site for the attachment host receptor OmpA. In Escherichia coli (Bacteriophage K3), this protein is Receptor-recognizing protein gp38 (38).